Here is a 147-residue protein sequence, read N- to C-terminus: Calmodulin (147 aa).

EF-hand domains lie at 8–43 (EQIA…LGLS), 44–79 (PSEA…QLKC), 81–116 (DSEQ…IGEK), and 120–147 (AEVD…LLSK). Positions 21, 23, 25, 27, 32, 57, 59, 61, 68, 94, 96, 98, and 105 each coordinate Ca(2+).

The protein belongs to the calmodulin family.

Its function is as follows. Calmodulin mediates the control of a large number of enzymes, ion channels and other proteins by Ca(2+). Among the enzymes to be stimulated by the calmodulin-Ca(2+) complex are a number of protein kinases and phosphatases. The protein is Calmodulin (CMD1) of Kluyveromyces lactis (strain ATCC 8585 / CBS 2359 / DSM 70799 / NBRC 1267 / NRRL Y-1140 / WM37) (Yeast).